The following is a 416-amino-acid chain: Enolase (416 aa).

Gln160 is a binding site for (2R)-2-phosphoglycerate. Glu204 acts as the Proton donor in catalysis. 3 residues coordinate Mg(2+): Asp239, Glu280, and Asp306. Lys331, Arg360, Ser361, and Lys382 together coordinate (2R)-2-phosphoglycerate. Lys331 (proton acceptor) is an active-site residue.

Belongs to the enolase family. It depends on Mg(2+) as a cofactor.

It is found in the cytoplasm. The protein localises to the secreted. It localises to the cell surface. It carries out the reaction (2R)-2-phosphoglycerate = phosphoenolpyruvate + H2O. The protein operates within carbohydrate degradation; glycolysis; pyruvate from D-glyceraldehyde 3-phosphate: step 4/5. Functionally, catalyzes the reversible conversion of 2-phosphoglycerate (2-PG) into phosphoenolpyruvate (PEP). It is essential for the degradation of carbohydrates via glycolysis. This chain is Enolase, found in Sulfurisphaera tokodaii (strain DSM 16993 / JCM 10545 / NBRC 100140 / 7) (Sulfolobus tokodaii).